Reading from the N-terminus, the 136-residue chain is Aspartate 1-decarboxylase (136 aa).

S25 acts as the Schiff-base intermediate with substrate; via pyruvic acid in catalysis. S25 bears the Pyruvic acid (Ser) mark. T57 is a binding site for substrate. The Proton donor role is filled by Y58. 73 to 75 (GAA) provides a ligand contact to substrate. The disordered stretch occupies residues 117-136 (IFQLGEETTPEEAPSLEQRN).

It belongs to the PanD family. In terms of assembly, heterooctamer of four alpha and four beta subunits. It depends on pyruvate as a cofactor. In terms of processing, is synthesized initially as an inactive proenzyme, which is activated by self-cleavage at a specific serine bond to produce a beta-subunit with a hydroxyl group at its C-terminus and an alpha-subunit with a pyruvoyl group at its N-terminus.

The protein resides in the cytoplasm. It carries out the reaction L-aspartate + H(+) = beta-alanine + CO2. Its pathway is cofactor biosynthesis; (R)-pantothenate biosynthesis; beta-alanine from L-aspartate: step 1/1. In terms of biological role, catalyzes the pyruvoyl-dependent decarboxylation of aspartate to produce beta-alanine. The protein is Aspartate 1-decarboxylase of Chloroherpeton thalassium (strain ATCC 35110 / GB-78).